Consider the following 172-residue polypeptide: Scytalone dehydratase-like protein Arp1 (172 aa).

Residue tyrosine 49 coordinates substrate. Catalysis depends on residues histidine 84 and histidine 109. Asparagine 130 provides a ligand contact to substrate.

Belongs to the scytalone dehydratase family. Homotrimer. Each subunit contains an active site, located in the central part of the hydrophobic core of the monomer, which functions independently.

Scytalone dehydratase-like protein; part of the Pks2 gene cluster that mediates the formation of infectious structures (appressoria), enabling these fungi to kill insects faster. The product of the Pks2 gene cluster is different from the one of Pks1 and has still not been identified. The polypeptide is Scytalone dehydratase-like protein Arp1 (Metarhizium guizhouense (strain ARSEF 977)).